A 215-amino-acid polypeptide reads, in one-letter code: Glycerol-3-phosphate acyltransferase (215 aa).

6 helical membrane passes run 3–23 (LILLILTAYLLGSIPTGLWIG), 42–61 (TNTFRILGLKAGAATLLIDI), 68–90 (TLLPVLVGASNISPITIGFFAVL), 110–130 (AGVLLGFAPLYLLFLAAVFVL), 134–154 (LFSMISLASLTASVVAVISVL), and 162–182 (LLPSYDWLLTITIVVLAAIII).

Belongs to the PlsY family. Probably interacts with PlsX.

The protein localises to the cell membrane. It carries out the reaction an acyl phosphate + sn-glycerol 3-phosphate = a 1-acyl-sn-glycero-3-phosphate + phosphate. Its pathway is lipid metabolism; phospholipid metabolism. Catalyzes the transfer of an acyl group from acyl-phosphate (acyl-PO(4)) to glycerol-3-phosphate (G3P) to form lysophosphatidic acid (LPA). This enzyme utilizes acyl-phosphate as fatty acyl donor, but not acyl-CoA or acyl-ACP. The sequence is that of Glycerol-3-phosphate acyltransferase from Streptococcus equi subsp. equi (strain 4047).